The following is a 68-amino-acid chain: Antimicrobial peptide Eval418 (68 aa).

The N-terminal stretch at 1-23 (MRTQLAVLLVALVLLQMIAQSEA) is a signal peptide. Position 36 is an isoleucine amide (Ile36). Positions 37-68 (GKRGLRNLDDLDDVFDDDLSAADLEFLKQLMR) are excised as a propeptide.

Belongs to the non-disulfide-bridged peptide (NDBP) superfamily. Short antimicrobial peptide (group 4) family. As to expression, expressed by the venom gland.

It is found in the secreted. In terms of biological role, probable antimicrobial peptide. Shows dose-dependent and time-dependent inactivation of herpes simplex virus type 1 (HSV-1) and dose-dependent inhibition of HSV-1 viral attachment to host cells. Scarcely suppress an established HSV-1 infection due to poor cellular uptake. This Euscorpiops validus (Scorpion) protein is Antimicrobial peptide Eval418.